Consider the following 327-residue polypeptide: L-serine dehydratase/L-threonine deaminase (327 aa).

The residue at position 2 (Ala-2) is an N-acetylalanine. Residue Lys-41 is modified to N6-(pyridoxal phosphate)lysine. Residue Pro-128 coordinates pyridoxal 5'-phosphate.

This sequence belongs to the serine/threonine dehydratase family. Homodimer. The cofactor is pyridoxal 5'-phosphate.

Its subcellular location is the cytoplasm. It catalyses the reaction L-serine = pyruvate + NH4(+). The catalysed reaction is L-threonine = 2-oxobutanoate + NH4(+). It participates in carbohydrate biosynthesis; gluconeogenesis. Catalyzes the pyridoxal-phosphate-dependent dehydrative deamination of L-threonine and L-serine to ammonia and alpha-ketobutyrate and pyruvate, respectively. In Mus musculus (Mouse), this protein is L-serine dehydratase/L-threonine deaminase (Sds).